The primary structure comprises 318 residues: Beta-galactosidase small subunit (318 aa).

The protein belongs to the bacterial beta-galactosidase small subunit family. As to quaternary structure, heterodimer of a large (LacL) and a small subunit (LacM).

It carries out the reaction Hydrolysis of terminal non-reducing beta-D-galactose residues in beta-D-galactosides.. Its function is as follows. Component of a beta-galactosidase. This Lactobacillus helveticus (Lactobacillus suntoryeus) protein is Beta-galactosidase small subunit.